The sequence spans 182 residues: Probable tyrosine phosphatase protein H4 (182 aa).

A Tyrosine-protein phosphatase domain is found at M1–I182. The active-site Phosphocysteine intermediate is the C142.

It belongs to the protein-tyrosine phosphatase family.

It catalyses the reaction O-phospho-L-tyrosyl-[protein] + H2O = L-tyrosyl-[protein] + phosphate. This chain is Probable tyrosine phosphatase protein H4 (H5), found in Microplitis demolitor (Parasitoid wasp).